We begin with the raw amino-acid sequence, 209 residues long: Ion-translocating oxidoreductase complex subunit G (209 aa).

A helical transmembrane segment spans residues 9-29 (GITLALFAAGATGLTAVVNSL). At Thr-175 the chain carries FMN phosphoryl threonine.

This sequence belongs to the RnfG family. As to quaternary structure, the complex is composed of six subunits: RnfA, RnfB, RnfC, RnfD, RnfE and RnfG. The cofactor is FMN.

The protein localises to the cell inner membrane. In terms of biological role, part of a membrane-bound complex that couples electron transfer with translocation of ions across the membrane. This is Ion-translocating oxidoreductase complex subunit G from Yersinia pestis.